Consider the following 297-residue polypeptide: Bifunctional protein FolD (297 aa).

Residues 167–169 (GRS) and I233 each bind NADP(+).

The protein belongs to the tetrahydrofolate dehydrogenase/cyclohydrolase family. In terms of assembly, homodimer.

The catalysed reaction is (6R)-5,10-methylene-5,6,7,8-tetrahydrofolate + NADP(+) = (6R)-5,10-methenyltetrahydrofolate + NADPH. The enzyme catalyses (6R)-5,10-methenyltetrahydrofolate + H2O = (6R)-10-formyltetrahydrofolate + H(+). It functions in the pathway one-carbon metabolism; tetrahydrofolate interconversion. Functionally, catalyzes the oxidation of 5,10-methylenetetrahydrofolate to 5,10-methenyltetrahydrofolate and then the hydrolysis of 5,10-methenyltetrahydrofolate to 10-formyltetrahydrofolate. The polypeptide is Bifunctional protein FolD (Zymomonas mobilis subsp. mobilis (strain ATCC 31821 / ZM4 / CP4)).